The primary structure comprises 255 residues: MTLRTENLTVSYGTDKVLNDVSLSLPTGKITALIGPNGCGKSTLLNCFSRLLMPQSGTVFLGDNPINMLSSRQLARRLSLLPQHHLTPEGITVQELVSYGRNPWLSLWGRLSAEDNARVNVAMNQTRINHLAVRRLTELSGGQRQRAFLAMVLAQNTPVVLLDEPTTYLDINHQVDLMRLMGELRTQGKTVVAVLHDLNQASRYCDQLVVMANGHVMAQGTPEEVMTPGLLRTVFSVEAEIHPEPVSGRPMCLMR.

The ABC transporter domain occupies 3-238 (LRTENLTVSY…GLLRTVFSVE (236 aa)). Position 35 to 42 (35 to 42 (GPNGCGKS)) interacts with ATP.

Belongs to the ABC transporter superfamily. As to quaternary structure, the complex is composed of two ATP-binding proteins (FecE), two transmembrane proteins (FecC and FecD) and a solute-binding protein (FecB).

It localises to the cell inner membrane. The catalysed reaction is iron(III) dicitrate(out) + ATP + H2O = iron(III) dicitrate(in) + ADP + phosphate + H(+). Part of the ABC transporter complex FecBCDE involved in citrate-dependent Fe(3+) uptake. Binds ATP. Probably responsible for energy coupling to the transport system. The chain is Fe(3+) dicitrate transport ATP-binding protein FecE from Escherichia coli (strain K12).